A 130-amino-acid polypeptide reads, in one-letter code: Small ribosomal subunit protein uS11 (130 aa).

This sequence belongs to the universal ribosomal protein uS11 family. Part of the 30S ribosomal subunit. Interacts with proteins S7 and S18. Binds to IF-3.

Functionally, located on the platform of the 30S subunit, it bridges several disparate RNA helices of the 16S rRNA. Forms part of the Shine-Dalgarno cleft in the 70S ribosome. The protein is Small ribosomal subunit protein uS11 of Prochlorococcus marinus (strain MIT 9215).